The chain runs to 392 residues: Cytochrome b (392 aa).

4 consecutive transmembrane segments (helical) span residues 38–58, 82–104, 119–139, and 185–205; these read FGSL…FLAM, WLLR…LHIF, VRCL…TGYV, and FFSL…LHLA. His88 and His102 together coordinate heme b. Residues His189 and His203 each coordinate heme b. Residue His208 coordinates a ubiquinone. 4 helical membrane passes run 231 to 251, 295 to 315, 327 to 347, and 354 to 373; these read FYVK…IWIF, SGGV…PFFK, IHQG…WIGC, and FVTI…AITP.

Belongs to the cytochrome b family. The main subunits of complex b-c1 are: cytochrome b, cytochrome c1 and the Rieske protein. Heme b serves as cofactor.

The protein localises to the mitochondrion inner membrane. Component of the ubiquinol-cytochrome c reductase complex (complex III or cytochrome b-c1 complex) that is part of the mitochondrial respiratory chain. The b-c1 complex mediates electron transfer from ubiquinol to cytochrome c. Contributes to the generation of a proton gradient across the mitochondrial membrane that is then used for ATP synthesis. The polypeptide is Cytochrome b (MT-CYB) (Vicia faba (Broad bean)).